Here is a 39-residue protein sequence, read N- to C-terminus: SPbeta prophage-derived uncharacterized protein YorT (39 aa).

The sequence is that of SPbeta prophage-derived uncharacterized protein YorT (yorT) from Bacillus subtilis (strain 168).